Reading from the N-terminus, the 199-residue chain is MKKLATVGSLIVTSTLVFSSMPFQNAHADTTSMNVSNKQSQNVQNHRPYGGVVPQGMTQAQYTELEKALPQLSAGSNMQDYNMKLYDATQNIADKYNVIITTNVGVFKPHAVRDMNGHALPLTKDGNFYQTNVDANGVNHGGSEMVQNKTGHMSQQGHMNQNTHEPTATHATRSYAIIKPSNDESKSKYAFIKSSNEPK.

An N-terminal signal peptide occupies residues 1–28 (MKKLATVGSLIVTSTLVFSSMPFQNAHA).

Its subcellular location is the secreted. This is an uncharacterized protein from Staphylococcus aureus (strain NCTC 8325 / PS 47).